A 159-amino-acid chain; its full sequence is Type-1 angiotensin II receptor-associated protein (159 aa).

Over methionine 1 to cysteine 23 the chain is Extracellular. The chain crosses the membrane as a helical span at residues isoleucine 24–alanine 44. Over valine 45–serine 55 the chain is Cytoplasmic. The chain crosses the membrane as a helical span at residues methionine 56–tyrosine 76. The Extracellular segment spans residues proline 77–arginine 86. Residues phenylalanine 87–tyrosine 107 form a helical membrane-spanning segment. Residues histidine 108–tyrosine 159 lie on the Cytoplasmic side of the membrane. An interaction with AGTR1 region spans residues tyrosine 110 to glycine 122. Phosphoserine is present on residues serine 126 and serine 127. Threonine 135 carries the phosphothreonine modification. Phosphoserine occurs at positions 138 and 153. Residues glutamate 140–tyrosine 159 form a disordered region.

As to quaternary structure, interacts with RACK1, and with the C-terminal region of AGTR1. As to expression, ubiquitous but more abundant in kidney, heart, pancreas and thyroid.

It localises to the endoplasmic reticulum membrane. The protein localises to the golgi apparatus membrane. Its subcellular location is the cytoplasmic vesicle membrane. Appears to be a negative regulator of type-1 angiotensin II receptor-mediated signaling by regulating receptor internalization as well as mechanism of receptor desensitization such as phosphorylation. Also induces a decrease in cell proliferation and angiotensin II-stimulated transcriptional activity. The sequence is that of Type-1 angiotensin II receptor-associated protein (AGTRAP) from Homo sapiens (Human).